Reading from the N-terminus, the 178-residue chain is ATP-dependent protease subunit HslV (178 aa).

T7 is a catalytic residue. Residues G162, C165, and T168 each contribute to the Na(+) site.

This sequence belongs to the peptidase T1B family. HslV subfamily. In terms of assembly, a double ring-shaped homohexamer of HslV is capped on each side by a ring-shaped HslU homohexamer. The assembly of the HslU/HslV complex is dependent on binding of ATP.

It is found in the cytoplasm. It catalyses the reaction ATP-dependent cleavage of peptide bonds with broad specificity.. Allosterically activated by HslU binding. Functionally, protease subunit of a proteasome-like degradation complex believed to be a general protein degrading machinery. This Burkholderia multivorans (strain ATCC 17616 / 249) protein is ATP-dependent protease subunit HslV.